A 451-amino-acid chain; its full sequence is Phosphoglucosamine mutase (451 aa).

Ser-103 serves as the catalytic Phosphoserine intermediate. 4 residues coordinate Mg(2+): Ser-103, Asp-243, Asp-245, and Asp-247. Position 103 is a phosphoserine (Ser-103).

Belongs to the phosphohexose mutase family. Mg(2+) is required as a cofactor. In terms of processing, activated by phosphorylation.

It carries out the reaction alpha-D-glucosamine 1-phosphate = D-glucosamine 6-phosphate. In terms of biological role, catalyzes the conversion of glucosamine-6-phosphate to glucosamine-1-phosphate. This Lactobacillus johnsonii (strain CNCM I-12250 / La1 / NCC 533) protein is Phosphoglucosamine mutase.